Reading from the N-terminus, the 72-residue chain is SPbeta prophage-derived uncharacterized protein YorV (72 aa).

This is SPbeta prophage-derived uncharacterized protein YorV (yorV) from Bacillus subtilis (strain 168).